Consider the following 344-residue polypeptide: GDSL esterase/lipase At5g03590 (344 aa).

Residues 1–19 (MHYLMKLFFSLSLFFGING) form the signal peptide. Catalysis depends on Ser-41, which acts as the Nucleophile. N-linked (GlcNAc...) asparagine glycans are attached at residues Asn-126, Asn-227, and Asn-238. Asp-318 is a catalytic residue.

This sequence belongs to the 'GDSL' lipolytic enzyme family.

It localises to the secreted. In Arabidopsis thaliana (Mouse-ear cress), this protein is GDSL esterase/lipase At5g03590.